A 177-amino-acid chain; its full sequence is ATP synthase subunit delta (177 aa).

The protein belongs to the ATPase delta chain family. As to quaternary structure, F-type ATPases have 2 components, F(1) - the catalytic core - and F(0) - the membrane proton channel. F(1) has five subunits: alpha(3), beta(3), gamma(1), delta(1), epsilon(1). F(0) has three main subunits: a(1), b(2) and c(10-14). The alpha and beta chains form an alternating ring which encloses part of the gamma chain. F(1) is attached to F(0) by a central stalk formed by the gamma and epsilon chains, while a peripheral stalk is formed by the delta and b chains.

The protein localises to the cell inner membrane. Functionally, f(1)F(0) ATP synthase produces ATP from ADP in the presence of a proton or sodium gradient. F-type ATPases consist of two structural domains, F(1) containing the extramembraneous catalytic core and F(0) containing the membrane proton channel, linked together by a central stalk and a peripheral stalk. During catalysis, ATP synthesis in the catalytic domain of F(1) is coupled via a rotary mechanism of the central stalk subunits to proton translocation. Its function is as follows. This protein is part of the stalk that links CF(0) to CF(1). It either transmits conformational changes from CF(0) to CF(1) or is implicated in proton conduction. The sequence is that of ATP synthase subunit delta from Serratia proteamaculans (strain 568).